Here is a 497-residue protein sequence, read N- to C-terminus: Acetyl-coenzyme A carboxylase carboxyl transferase subunit beta, chloroplastic (497 aa).

The disordered stretch occupies residues 30–50 (GPVENTTVNEDPTRNDTDKNI). Basic and acidic residues predominate over residues 40–50 (DPTRNDTDKNI). Residues 230–497 (VQCECENCYG…FFPLNQNSIK (268 aa)) enclose the CoA carboxyltransferase N-terminal domain. Zn(2+) is bound by residues C232, C237, C253, and C256. Residues 232–256 (CECENCYGVNYKKSLNSKMNICEQC) form a C4-type zinc finger.

It belongs to the AccD/PCCB family. As to quaternary structure, acetyl-CoA carboxylase is a heterohexamer composed of biotin carboxyl carrier protein, biotin carboxylase and 2 subunits each of ACCase subunit alpha and ACCase plastid-coded subunit beta (accD). Zn(2+) serves as cofactor.

The protein resides in the plastid. It localises to the chloroplast stroma. The catalysed reaction is N(6)-carboxybiotinyl-L-lysyl-[protein] + acetyl-CoA = N(6)-biotinyl-L-lysyl-[protein] + malonyl-CoA. It functions in the pathway lipid metabolism; malonyl-CoA biosynthesis; malonyl-CoA from acetyl-CoA: step 1/1. Component of the acetyl coenzyme A carboxylase (ACC) complex. Biotin carboxylase (BC) catalyzes the carboxylation of biotin on its carrier protein (BCCP) and then the CO(2) group is transferred by the transcarboxylase to acetyl-CoA to form malonyl-CoA. This is Acetyl-coenzyme A carboxylase carboxyl transferase subunit beta, chloroplastic from Gossypium hirsutum (Upland cotton).